The primary structure comprises 251 residues: Hydroxyacylglutathione hydrolase (251 aa).

Positions 53, 55, 57, 58, 110, 127, and 165 each coordinate Zn(2+).

Belongs to the metallo-beta-lactamase superfamily. Glyoxalase II family. As to quaternary structure, monomer. The cofactor is Zn(2+).

The enzyme catalyses an S-(2-hydroxyacyl)glutathione + H2O = a 2-hydroxy carboxylate + glutathione + H(+). Its pathway is secondary metabolite metabolism; methylglyoxal degradation; (R)-lactate from methylglyoxal: step 2/2. In terms of biological role, thiolesterase that catalyzes the hydrolysis of S-D-lactoyl-glutathione to form glutathione and D-lactic acid. The polypeptide is Hydroxyacylglutathione hydrolase (Escherichia coli O9:H4 (strain HS)).